We begin with the raw amino-acid sequence, 161 residues long: MPSFDIVSEIDEVALRHAVENANRELSTRFDFRGVEASIAQNGLAVTLKTESDFQVRQLEELFTKACLKQNISAAGADKPEELEHSGKTFSLTLTFRQGIDQPVAKQIVKLIKESKIKVQASIQGDQVRVNGKKRDDLQAVMALLRESKIETPLQFNNFRD.

Belongs to the YajQ family.

In terms of biological role, nucleotide-binding protein. The protein is Nucleotide-binding protein ABO_0048 of Alcanivorax borkumensis (strain ATCC 700651 / DSM 11573 / NCIMB 13689 / SK2).